We begin with the raw amino-acid sequence, 160 residues long: SsrA-binding protein (160 aa).

The disordered stretch occupies residues 133 to 160; that stretch reads GKKLHDKRDTEKERDWKREQQRLLRDRG. The segment covering 138–160 has biased composition (basic and acidic residues); it reads DKRDTEKERDWKREQQRLLRDRG.

This sequence belongs to the SmpB family.

Its subcellular location is the cytoplasm. Required for rescue of stalled ribosomes mediated by trans-translation. Binds to transfer-messenger RNA (tmRNA), required for stable association of tmRNA with ribosomes. tmRNA and SmpB together mimic tRNA shape, replacing the anticodon stem-loop with SmpB. tmRNA is encoded by the ssrA gene; the 2 termini fold to resemble tRNA(Ala) and it encodes a 'tag peptide', a short internal open reading frame. During trans-translation Ala-aminoacylated tmRNA acts like a tRNA, entering the A-site of stalled ribosomes, displacing the stalled mRNA. The ribosome then switches to translate the ORF on the tmRNA; the nascent peptide is terminated with the 'tag peptide' encoded by the tmRNA and targeted for degradation. The ribosome is freed to recommence translation, which seems to be the essential function of trans-translation. In Rhizorhabdus wittichii (strain DSM 6014 / CCUG 31198 / JCM 15750 / NBRC 105917 / EY 4224 / RW1) (Sphingomonas wittichii), this protein is SsrA-binding protein.